A 257-amino-acid chain; its full sequence is Synaptosomal-associated protein 29 (257 aa).

Residues methionine 1 to glutamine 42 form a disordered region. Over residues threonine 20–proline 32 the composition is skewed to basic and acidic residues. 7 positions are modified to phosphoserine: serine 77, serine 78, serine 114, serine 163, serine 181, serine 203, and serine 209. Residues arginine 195–leucine 257 enclose the t-SNARE coiled-coil homology domain.

The protein belongs to the SNAP-25 family. Forms a SNARE complex, composed of VAMP8, SNAP29 and STX17, involved in fusion of autophagosome with lysosome. Interacts with multiple syntaxins including STX6. Interacts with EIPR1. Interacts with STX17; this interaction is increased in the absence of TMEM39A. As to expression, widely expressed.

The protein localises to the cytoplasm. It is found in the golgi apparatus membrane. The protein resides in the cytoplasmic vesicle. It localises to the autophagosome membrane. Its subcellular location is the cell projection. The protein localises to the cilium membrane. Its function is as follows. SNAREs, soluble N-ethylmaleimide-sensitive factor-attachment protein receptors, are essential proteins for fusion of cellular membranes. SNAREs localized on opposing membranes assemble to form a trans-SNARE complex, an extended, parallel four alpha-helical bundle that drives membrane fusion. SNAP29 is a SNARE involved in autophagy through the direct control of autophagosome membrane fusion with the lysososome membrane. Also plays a role in ciliogenesis by regulating membrane fusions. This Rattus norvegicus (Rat) protein is Synaptosomal-associated protein 29.